Consider the following 308-residue polypeptide: Methionyl-tRNA formyltransferase (308 aa).

109 to 112 (SLLP) provides a ligand contact to (6S)-5,6,7,8-tetrahydrofolate.

It belongs to the Fmt family.

It carries out the reaction L-methionyl-tRNA(fMet) + (6R)-10-formyltetrahydrofolate = N-formyl-L-methionyl-tRNA(fMet) + (6S)-5,6,7,8-tetrahydrofolate + H(+). In terms of biological role, attaches a formyl group to the free amino group of methionyl-tRNA(fMet). The formyl group appears to play a dual role in the initiator identity of N-formylmethionyl-tRNA by promoting its recognition by IF2 and preventing the misappropriation of this tRNA by the elongation apparatus. The chain is Methionyl-tRNA formyltransferase from Salinispora tropica (strain ATCC BAA-916 / DSM 44818 / JCM 13857 / NBRC 105044 / CNB-440).